The chain runs to 405 residues: Na(+)-translocating NADH-quinone reductase subunit F (405 aa).

A helical transmembrane segment spans residues 3–23 (IILGIVMFTVIVLVLALMILF). In terms of domain architecture, 2Fe-2S ferredoxin-type spans 32–124 (GDITIKVNGE…DMDIEVPEEV (93 aa)). The [2Fe-2S] cluster site is built by C67, C73, C76, and C108. One can recognise an FAD-binding FR-type domain in the interval 127 to 267 (VKKWECTVIS…SGPFGEFFAK (141 aa)).

It belongs to the NqrF family. As to quaternary structure, composed of six subunits; NqrA, NqrB, NqrC, NqrD, NqrE and NqrF. The cofactor is [2Fe-2S] cluster. FAD serves as cofactor.

It localises to the cell inner membrane. It catalyses the reaction a ubiquinone + n Na(+)(in) + NADH + H(+) = a ubiquinol + n Na(+)(out) + NAD(+). NQR complex catalyzes the reduction of ubiquinone-1 to ubiquinol by two successive reactions, coupled with the transport of Na(+) ions from the cytoplasm to the periplasm. The first step is catalyzed by NqrF, which accepts electrons from NADH and reduces ubiquinone-1 to ubisemiquinone by a one-electron transfer pathway. The sequence is that of Na(+)-translocating NADH-quinone reductase subunit F from Neisseria meningitidis serogroup C / serotype 2a (strain ATCC 700532 / DSM 15464 / FAM18).